Reading from the N-terminus, the 132-residue chain is Small ribosomal subunit protein uS8 (132 aa).

The protein belongs to the universal ribosomal protein uS8 family. As to quaternary structure, part of the 30S ribosomal subunit. Contacts proteins S5 and S12.

In terms of biological role, one of the primary rRNA binding proteins, it binds directly to 16S rRNA central domain where it helps coordinate assembly of the platform of the 30S subunit. The protein is Small ribosomal subunit protein uS8 of Ehrlichia ruminantium (strain Welgevonden).